The sequence spans 380 residues: Phospho-N-acetylmuramoyl-pentapeptide-transferase (380 aa).

Transmembrane regions (helical) follow at residues 25–45, 70–90, 98–118, 142–162, 173–193, 209–229, 245–265, 272–294, and 357–377; these read RAAA…PAII, TTPT…VLLW, VLLA…DDYL, VLCG…TLPG, VLVV…VTFI, GLSS…AYVL, GAGE…GFLW, QVFM…AILL, and QVVV…LSTL.

It belongs to the glycosyltransferase 4 family. MraY subfamily. It depends on Mg(2+) as a cofactor.

Its subcellular location is the cell inner membrane. It catalyses the reaction UDP-N-acetyl-alpha-D-muramoyl-L-alanyl-gamma-D-glutamyl-meso-2,6-diaminopimeloyl-D-alanyl-D-alanine + di-trans,octa-cis-undecaprenyl phosphate = di-trans,octa-cis-undecaprenyl diphospho-N-acetyl-alpha-D-muramoyl-L-alanyl-D-glutamyl-meso-2,6-diaminopimeloyl-D-alanyl-D-alanine + UMP. It functions in the pathway cell wall biogenesis; peptidoglycan biosynthesis. In terms of biological role, catalyzes the initial step of the lipid cycle reactions in the biosynthesis of the cell wall peptidoglycan: transfers peptidoglycan precursor phospho-MurNAc-pentapeptide from UDP-MurNAc-pentapeptide onto the lipid carrier undecaprenyl phosphate, yielding undecaprenyl-pyrophosphoryl-MurNAc-pentapeptide, known as lipid I. The protein is Phospho-N-acetylmuramoyl-pentapeptide-transferase of Gemmatimonas aurantiaca (strain DSM 14586 / JCM 11422 / NBRC 100505 / T-27).